A 149-amino-acid chain; its full sequence is Flavodoxin YqcA (149 aa).

The Flavodoxin-like domain maps to 4 to 145 (IGIFVGTMYG…ESNPWVEQWG (142 aa)). FMN is bound by residues 10-15 (TMYGNS) and 99-101 (NFC).

Belongs to the flavodoxin family. MioC subfamily. As to quaternary structure, monomer. The cofactor is FMN.

Probable electron transporter. This Escherichia coli (strain K12) protein is Flavodoxin YqcA (yqcA).